Consider the following 717-residue polypeptide: Ribosomal RNA large subunit methyltransferase K/L (717 aa).

The THUMP domain maps to 44 to 155; sequence DAYKVCIYSY…KQFVNVFLCL (112 aa).

It belongs to the methyltransferase superfamily. RlmKL family.

It localises to the cytoplasm. The enzyme catalyses guanosine(2445) in 23S rRNA + S-adenosyl-L-methionine = N(2)-methylguanosine(2445) in 23S rRNA + S-adenosyl-L-homocysteine + H(+). It carries out the reaction guanosine(2069) in 23S rRNA + S-adenosyl-L-methionine = N(2)-methylguanosine(2069) in 23S rRNA + S-adenosyl-L-homocysteine + H(+). Specifically methylates the guanine in position 2445 (m2G2445) and the guanine in position 2069 (m7G2069) of 23S rRNA. The polypeptide is Ribosomal RNA large subunit methyltransferase K/L (Francisella tularensis subsp. tularensis (strain SCHU S4 / Schu 4)).